The chain runs to 262 residues: Global transcriptional regulator CodY (262 aa).

The GAF domain stretch occupies residues 1–159 (MAHLLEKTRK…SSTVVGIQLL (159 aa)). Positions 207 to 226 (ASVIADRIGITRSVIVNALR) form a DNA-binding region, H-T-H motif.

The protein belongs to the CodY family.

The protein resides in the cytoplasm. In terms of biological role, DNA-binding global transcriptional regulator which is involved in the adaptive response to starvation and acts by directly or indirectly controlling the expression of numerous genes in response to nutrient availability. During rapid exponential growth, CodY is highly active and represses genes whose products allow adaptation to nutrient depletion. This chain is Global transcriptional regulator CodY, found in Streptococcus gordonii (strain Challis / ATCC 35105 / BCRC 15272 / CH1 / DL1 / V288).